The chain runs to 334 residues: MKEIIAKLADFKDLSSAEMTDVIERIVTGRVTESQIVAFLLGLKMKGETIEERTALAQVMRGHAKQIPTTIRTAMDNCGTGGDKSFSFNISTTAAFVLAGGGIKMAKHGNRSISSKSGSADVLEALGINLDLDAASLGKVFEQTGIVFLFAKNMHPAMKYIMPARLSLGIPTIMNLTGPLIHPMSLETQLLGTSRPDMLESTAEVLKNMGRKRAVVVSGPDGLDEAGLHGRTQYALLADGQISLHSFLPSDIGMEEISLEVIRGGNAKENAEILLSVLQNQASPYLETTVLNAGLGFYANGKSDSIEEGIALARQVIASGVAYEKLKQLQEYQK.

Residues G79, 82–83 (GD), S87, 89–92 (NIST), 107–115 (KHGNRSISS), and S119 each bind 5-phospho-alpha-D-ribose 1-diphosphate. Residue G79 coordinates anthranilate. Residue S91 participates in Mg(2+) binding. Residue N110 participates in anthranilate binding. R165 serves as a coordination point for anthranilate. D224 and E225 together coordinate Mg(2+).

Belongs to the anthranilate phosphoribosyltransferase family. Homodimer. Mg(2+) serves as cofactor.

It carries out the reaction N-(5-phospho-beta-D-ribosyl)anthranilate + diphosphate = 5-phospho-alpha-D-ribose 1-diphosphate + anthranilate. It functions in the pathway amino-acid biosynthesis; L-tryptophan biosynthesis; L-tryptophan from chorismate: step 2/5. Functionally, catalyzes the transfer of the phosphoribosyl group of 5-phosphorylribose-1-pyrophosphate (PRPP) to anthranilate to yield N-(5'-phosphoribosyl)-anthranilate (PRA). This is Anthranilate phosphoribosyltransferase from Streptococcus sanguinis (strain SK36).